Reading from the N-terminus, the 237-residue chain is LexA repressor (237 aa).

The span at Met-1–Asn-12 shows a compositional bias: polar residues. The interval Met-1–Arg-20 is disordered. The H-T-H motif DNA-binding region spans Ile-41 to Lys-61. Positions Gly-67–Asp-80 are enriched in basic and acidic residues. Residues Gly-67–Thr-112 are disordered. Active-site for autocatalytic cleavage activity residues include Ser-161 and Lys-198.

It belongs to the peptidase S24 family. As to quaternary structure, homodimer.

It carries out the reaction Hydrolysis of Ala-|-Gly bond in repressor LexA.. In terms of biological role, represses a number of genes involved in the response to DNA damage (SOS response), including recA and lexA. In the presence of single-stranded DNA, RecA interacts with LexA causing an autocatalytic cleavage which disrupts the DNA-binding part of LexA, leading to derepression of the SOS regulon and eventually DNA repair. This chain is LexA repressor, found in Corynebacterium diphtheriae (strain ATCC 700971 / NCTC 13129 / Biotype gravis).